The sequence spans 448 residues: GTPase Der (448 aa).

2 consecutive EngA-type G domains span residues proline 3–glutamate 167 and threonine 182–threonine 355. GTP is bound by residues glycine 9–serine 16, aspartate 56–phenylalanine 60, asparagine 119–glutamate 122, glycine 188–serine 195, aspartate 235–leucine 239, and asparagine 300–aspartate 303. Residues arginine 356–histidine 440 enclose the KH-like domain.

Belongs to the TRAFAC class TrmE-Era-EngA-EngB-Septin-like GTPase superfamily. EngA (Der) GTPase family. As to quaternary structure, associates with the 50S ribosomal subunit.

Its function is as follows. GTPase that plays an essential role in the late steps of ribosome biogenesis. This Leptothrix cholodnii (strain ATCC 51168 / LMG 8142 / SP-6) (Leptothrix discophora (strain SP-6)) protein is GTPase Der.